The following is a 675-amino-acid chain: uncharacterized protein (675 aa).

This is an uncharacterized protein from Homo sapiens (Human).